The chain runs to 209 residues: Thymidylate kinase (209 aa).

ATP is bound at residue 13-20 (GLEGAGKS).

Belongs to the thymidylate kinase family.

It carries out the reaction dTMP + ATP = dTDP + ADP. Its function is as follows. Phosphorylation of dTMP to form dTDP in both de novo and salvage pathways of dTTP synthesis. The sequence is that of Thymidylate kinase from Shewanella sp. (strain MR-4).